We begin with the raw amino-acid sequence, 243 residues long: Segregation and condensation protein A (243 aa).

Belongs to the ScpA family. In terms of assembly, component of a cohesin-like complex composed of ScpA, ScpB and the Smc homodimer, in which ScpA and ScpB bind to the head domain of Smc. The presence of the three proteins is required for the association of the complex with DNA.

It localises to the cytoplasm. Functionally, participates in chromosomal partition during cell division. May act via the formation of a condensin-like complex containing Smc and ScpB that pull DNA away from mid-cell into both cell halves. This Staphylococcus haemolyticus (strain JCSC1435) protein is Segregation and condensation protein A.